Consider the following 102-residue polypeptide: Small ribosomal subunit protein uS10 (102 aa).

The protein belongs to the universal ribosomal protein uS10 family. Part of the 30S ribosomal subunit.

Its function is as follows. Involved in the binding of tRNA to the ribosomes. The polypeptide is Small ribosomal subunit protein uS10 (Leuconostoc citreum (strain KM20)).